Here is a 262-residue protein sequence, read N- to C-terminus: Transcription factor Adf-1 (262 aa).

Residues 24–104 (NLIEAVKLNP…QMQFLVDSIR (81 aa)) constitute a DNA-binding region (MADF). Residues 217–256 (SAEDQSFGMVVTDMLNTLGVRQKAEAKVHIIKYLTDMQLL) form the BESS domain.

In terms of processing, O-glycosylated; contains N-acetylglucosamine side chains.

It localises to the nucleus. Functionally, may play an important role not only in the regulation of Adh expression but also in the transcription of other genes. This is Transcription factor Adf-1 (Adf1) from Drosophila melanogaster (Fruit fly).